A 180-amino-acid chain; its full sequence is Oligoribonuclease (180 aa).

Residues leucine 7–leucine 170 form the Exonuclease domain. Tyrosine 128 is a catalytic residue.

The protein belongs to the oligoribonuclease family.

The protein localises to the cytoplasm. In terms of biological role, 3'-to-5' exoribonuclease specific for small oligoribonucleotides. The chain is Oligoribonuclease from Pectobacterium atrosepticum (strain SCRI 1043 / ATCC BAA-672) (Erwinia carotovora subsp. atroseptica).